The chain runs to 137 residues: Small ribosomal subunit protein bS16 (137 aa).

This sequence belongs to the bacterial ribosomal protein bS16 family.

In Leuconostoc citreum (strain KM20), this protein is Small ribosomal subunit protein bS16.